We begin with the raw amino-acid sequence, 459 residues long: Transcription factor 7-like 2 (459 aa).

Over residues 1-11 (MPQLNGGGGDD) the composition is skewed to gly residues. A CTNNB1-binding region spans residues 1-53 (MPQLNGGGGDDLGANDELISFKDEGEQEEKNSENSSAERDLADVKSSLVNESE). The interval 1–96 (MPQLNGGGGD…AKRQDGGLFK (96 aa)) is disordered. A compositionally biased stretch (basic and acidic residues) spans 19 to 43 (ISFKDEGEQEEKNSENSSAERDLAD). A Glycyl lysine isopeptide (Lys-Gly) (interchain with G-Cter in SUMO2) cross-link involves residue Lys22. Positions 47–56 (SLVNESETNQ) are enriched in polar residues. The segment covering 63–91 (EAERRPPPRSESFRDKSRESLEEAAKRQD) has biased composition (basic and acidic residues). Phosphothreonine; by NLK is present on residues Thr178 and Thr189. The tract at residues 178–372 (TPLITYSNEH…RRWHALSREE (195 aa)) is mediates interaction with MAD2L2. The span at 295-305 (TVKQESSQSDV) shows a compositional bias: polar residues. Disordered stretches follow at residues 295 to 327 (TVKQ…KPHI) and 397 to 418 (RDNY…TNEH). Lys297 is covalently cross-linked (Glycyl lysine isopeptide (Lys-Gly) (interchain with G-Cter in SUMO)). Residues 312-323 (KHQDSKKEEEKK) show a composition bias toward basic and acidic residues. The segment at residues 327 to 395 (IKKPLNAFML…LHMQLYPGWS (69 aa)) is a DNA-binding region (HMG box). The Nuclear localization signal motif lies at 402-408 (KKKKRKR).

It belongs to the TCF/LEF family. As to quaternary structure, interacts with TGFB1I1. Interacts with SPIN1. Interacts with CTNNB1 (via the armadillo repeat); forms stable transcription complex. Interacts with EP300. Interacts with NLK. Interacts with CCDC85B (probably through the HMG box); prevents interaction with CTNNB1. Interacts with TNIK. Interacts with MAD2L2; prevents TCF7L2/TCF4 binding to promZIPK/DAPK3oters, negatively modulating its transcriptional activity. Interacts with ZIPK/DAPK3. Interacts with XIAP/BIRC4 and TLE3. Interacts with DDIT3/CHOP. The CTNNB1 and TCF7L2/TCF4 complex interacts with PML (isoform PML-4). Identified in a complex with CTNNB1 and FERMT2. Interacts with C11orf84/SPINDOC in a SPIN1-dependent manner. Interacts with DAZAP2; the interaction results in localization of DAZAP2 to the nucleus. In terms of processing, phosphorylated at Thr-178 and/or Thr-189 by NLK. Phosphorylation by NLK at these sites inhibits DNA-binding by TCF7L2/TCF4, thereby preventing transcriptional activation of target genes of the canonical Wnt/beta-catenin signaling pathway. Polysumoylated. Sumoylation is enhanced by PIAS family members and desumoylation is enhanced by SENP2. Sumoylation/desumoylation regulates TCF7L2/TCF4 transcription activity in the Wnt/beta-catenin signaling pathway without altering interaction with CTNNB1 nor binding to DNA. Detected in adult brain and liver, and at lower levels in intestine, with a clear increase from the distal colon to the duodenum. Detected at low levels in heart, lung, kidney, pituitary and testis.

The protein localises to the nucleus. The protein resides in the PML body. Its function is as follows. Participates in the Wnt signaling pathway and modulates MYC expression by binding to its promoter in a sequence-specific manner. Acts as a repressor in the absence of CTNNB1, and as activator in its presence. Activates transcription from promoters with several copies of the Tcf motif CCTTTGATC in the presence of CTNNB1. TLE1, TLE2, TLE3 and TLE4 repress transactivation mediated by TCF7L2/TCF4 and CTNNB1. Expression of dominant-negative mutants results in cell-cycle arrest in G1. Necessary for the maintenance of the epithelial stem-cell compartment of the small intestine. The protein is Transcription factor 7-like 2 (Tcf7l2) of Mus musculus (Mouse).